A 435-amino-acid polypeptide reads, in one-letter code: 5-methylthioadenosine/S-adenosylhomocysteine deaminase (435 aa).

2 residues coordinate Zn(2+): His65 and His67. Glu94, Arg150, and His189 together coordinate substrate. Residue His216 participates in Zn(2+) binding. Substrate is bound by residues Glu219 and Asp304. Zn(2+) is bound at residue Asp304.

Belongs to the metallo-dependent hydrolases superfamily. MTA/SAH deaminase family. The cofactor is Zn(2+).

The catalysed reaction is S-adenosyl-L-homocysteine + H2O + H(+) = S-inosyl-L-homocysteine + NH4(+). It carries out the reaction S-methyl-5'-thioadenosine + H2O + H(+) = S-methyl-5'-thioinosine + NH4(+). In terms of biological role, catalyzes the deamination of 5-methylthioadenosine and S-adenosyl-L-homocysteine into 5-methylthioinosine and S-inosyl-L-homocysteine, respectively. Is also able to deaminate adenosine. This is 5-methylthioadenosine/S-adenosylhomocysteine deaminase from Bacillus cereus (strain AH187).